A 148-amino-acid chain; its full sequence is Glutaredoxin-C10 (148 aa).

Positions 16–55 (TLDLTVHPPPPPPLPPPAPSTVSSSTASTSLSFDEEETSE) are disordered. Residues 22–34 (HPPPPPPLPPPAP) show a composition bias toward pro residues. Positions 35 to 47 (STVSSSTASTSLS) are enriched in low complexity. The region spanning 55–147 (ESKIGRLISE…PRLVEVGALW (93 aa)) is the Glutaredoxin domain. A disulfide bridge connects residues C76 and C79.

The protein belongs to the glutaredoxin family. CC-type subfamily.

The protein localises to the cytoplasm. Has a glutathione-disulfide oxidoreductase activity in the presence of NADPH and glutathione reductase. Reduces low molecular weight disulfides and proteins. In Arabidopsis thaliana (Mouse-ear cress), this protein is Glutaredoxin-C10 (GRXC10).